Here is a 225-residue protein sequence, read N- to C-terminus: Iron-sulfur flavoprotein CD630_04720 (225 aa).

Positions 49, 52, 55, and 61 each coordinate [4Fe-4S] cluster.

This sequence belongs to the SsuE family. Isf subfamily. In terms of assembly, homodimer. Requires FMN as cofactor. [4Fe-4S] cluster serves as cofactor.

In terms of biological role, redox-active protein probably involved in electron transport. In Clostridioides difficile (strain 630) (Peptoclostridium difficile), this protein is Iron-sulfur flavoprotein CD630_04720.